Here is a 240-residue protein sequence, read N- to C-terminus: ATP-dependent dethiobiotin synthetase BioD (240 aa).

13 to 18 (GVGKTI) is an ATP binding site. Residue threonine 17 coordinates Mg(2+). Lysine 38 is a catalytic residue. Threonine 42 is a substrate binding site. ATP-binding positions include aspartate 55, 116 to 119 (EGVG), and 214 to 216 (PYL). The Mg(2+) site is built by aspartate 55 and glutamate 116.

This sequence belongs to the dethiobiotin synthetase family. Homodimer. Requires Mg(2+) as cofactor.

The protein resides in the cytoplasm. It catalyses the reaction (7R,8S)-7,8-diammoniononanoate + CO2 + ATP = (4R,5S)-dethiobiotin + ADP + phosphate + 3 H(+). The protein operates within cofactor biosynthesis; biotin biosynthesis; biotin from 7,8-diaminononanoate: step 1/2. Its function is as follows. Catalyzes a mechanistically unusual reaction, the ATP-dependent insertion of CO2 between the N7 and N8 nitrogen atoms of 7,8-diaminopelargonic acid (DAPA, also called 7,8-diammoniononanoate) to form a ureido ring. The protein is ATP-dependent dethiobiotin synthetase BioD of Thermodesulfovibrio yellowstonii (strain ATCC 51303 / DSM 11347 / YP87).